The chain runs to 280 residues: Pantothenate synthetase (280 aa).

30-37 serves as a coordination point for ATP; that stretch reads MGYLHEGH. His37 (proton donor) is an active-site residue. Gln61 contributes to the (R)-pantoate binding site. Gln61 is a binding site for beta-alanine. 147-150 provides a ligand contact to ATP; sequence GQKD. Gln153 contacts (R)-pantoate. Residues Val176 and 184 to 187 each bind ATP; that span reads MSSR.

It belongs to the pantothenate synthetase family. As to quaternary structure, homodimer.

The protein resides in the cytoplasm. It catalyses the reaction (R)-pantoate + beta-alanine + ATP = (R)-pantothenate + AMP + diphosphate + H(+). It functions in the pathway cofactor biosynthesis; (R)-pantothenate biosynthesis; (R)-pantothenate from (R)-pantoate and beta-alanine: step 1/1. Catalyzes the condensation of pantoate with beta-alanine in an ATP-dependent reaction via a pantoyl-adenylate intermediate. This Thermotoga petrophila (strain ATCC BAA-488 / DSM 13995 / JCM 10881 / RKU-1) protein is Pantothenate synthetase.